A 368-amino-acid chain; its full sequence is 3-dehydroquinate synthase (368 aa).

Residues aspartate 71–lysine 76, glycine 105–aspartate 109, threonine 129–threonine 130, lysine 142, lysine 151, and threonine 169–threonine 172 each bind NAD(+). Glutamate 184, histidine 247, and histidine 264 together coordinate Zn(2+).

The protein belongs to the sugar phosphate cyclases superfamily. Dehydroquinate synthase family. Requires Co(2+) as cofactor. It depends on Zn(2+) as a cofactor. The cofactor is NAD(+).

It is found in the cytoplasm. The catalysed reaction is 7-phospho-2-dehydro-3-deoxy-D-arabino-heptonate = 3-dehydroquinate + phosphate. It participates in metabolic intermediate biosynthesis; chorismate biosynthesis; chorismate from D-erythrose 4-phosphate and phosphoenolpyruvate: step 2/7. In terms of biological role, catalyzes the conversion of 3-deoxy-D-arabino-heptulosonate 7-phosphate (DAHP) to dehydroquinate (DHQ). This chain is 3-dehydroquinate synthase, found in Cupriavidus taiwanensis (strain DSM 17343 / BCRC 17206 / CCUG 44338 / CIP 107171 / LMG 19424 / R1) (Ralstonia taiwanensis (strain LMG 19424)).